We begin with the raw amino-acid sequence, 220 residues long: Protein GrpE (220 aa).

Residues 1–22 (MSDEKNKFTDASFENCDLKNPS) form a disordered region.

This sequence belongs to the GrpE family. Homodimer.

The protein localises to the cytoplasm. Participates actively in the response to hyperosmotic and heat shock by preventing the aggregation of stress-denatured proteins, in association with DnaK and GrpE. It is the nucleotide exchange factor for DnaK and may function as a thermosensor. Unfolded proteins bind initially to DnaJ; upon interaction with the DnaJ-bound protein, DnaK hydrolyzes its bound ATP, resulting in the formation of a stable complex. GrpE releases ADP from DnaK; ATP binding to DnaK triggers the release of the substrate protein, thus completing the reaction cycle. Several rounds of ATP-dependent interactions between DnaJ, DnaK and GrpE are required for fully efficient folding. In Bartonella henselae (strain ATCC 49882 / DSM 28221 / CCUG 30454 / Houston 1) (Rochalimaea henselae), this protein is Protein GrpE.